We begin with the raw amino-acid sequence, 345 residues long: Ryncolin-4 (345 aa).

The first 19 residues, M1–G19, serve as a signal peptide directing secretion. Residues I48 to N118 form a disordered region. In terms of domain architecture, Collagen-like spans G57–G114. The span at D86 to D116 shows a compositional bias: basic and acidic residues. Residues D121 to K339 enclose the Fibrinogen C-terminal domain. Intrachain disulfides connect C130–C158 and C282–C295.

The protein belongs to the ficolin lectin family. Veficolin subfamily. Hydroxylated, possibly at Pro-80. In terms of tissue distribution, expressed by the venom duct.

The protein resides in the secreted. Functionally, initiates complement activation and/or interferes in platelet aggregation and/or blood coagulation. This is Ryncolin-4 from Cerberus rynchops (Dog-faced water snake).